The following is a 329-amino-acid chain: Phosphate acyltransferase (329 aa).

This sequence belongs to the PlsX family. As to quaternary structure, homodimer. Probably interacts with PlsY.

The protein resides in the cytoplasm. The catalysed reaction is a fatty acyl-[ACP] + phosphate = an acyl phosphate + holo-[ACP]. It participates in lipid metabolism; phospholipid metabolism. Its function is as follows. Catalyzes the reversible formation of acyl-phosphate (acyl-PO(4)) from acyl-[acyl-carrier-protein] (acyl-ACP). This enzyme utilizes acyl-ACP as fatty acyl donor, but not acyl-CoA. The polypeptide is Phosphate acyltransferase (Anoxybacillus flavithermus (strain DSM 21510 / WK1)).